The sequence spans 291 residues: Acetylglutamate kinase (291 aa).

Residues 65 to 66 (GG), R87, and N186 contribute to the substrate site.

The protein belongs to the acetylglutamate kinase family. ArgB subfamily.

It localises to the cytoplasm. The catalysed reaction is N-acetyl-L-glutamate + ATP = N-acetyl-L-glutamyl 5-phosphate + ADP. Its pathway is amino-acid biosynthesis; L-arginine biosynthesis; N(2)-acetyl-L-ornithine from L-glutamate: step 2/4. In terms of biological role, catalyzes the ATP-dependent phosphorylation of N-acetyl-L-glutamate. This chain is Acetylglutamate kinase, found in Mycolicibacterium vanbaalenii (strain DSM 7251 / JCM 13017 / BCRC 16820 / KCTC 9966 / NRRL B-24157 / PYR-1) (Mycobacterium vanbaalenii).